The primary structure comprises 376 residues: Zinc transporter 7 (376 aa).

Residues 1–37 are Cytoplasmic-facing; that stretch reads MLPLSIKDDEYKPPKFNLFRKISGWFRSILSDKTSRN. A helical transmembrane segment spans residues 38–58; the sequence is LFFFLCLNLSFAFVELLYGIW. Residues 59–67 lie on the Lumenal side of the membrane; sequence SNCLGLISD. A helical membrane pass occupies residues 68 to 88; the sequence is SFHMFFDSTAILAGLAASVIS. The Cytoplasmic portion of the chain corresponds to 89–102; that stretch reads KWRDNDAFSYGYVR. Residues 103–123 traverse the membrane as a helical segment; that stretch reads AEVLAGFVNGLFLIFTAFFIF. Topologically, residues 124 to 140 are lumenal; it reads SEGVERALAPPDVHHER. Residues 141-161 traverse the membrane as a helical segment; it reads LLLVSILGFVVNLVGIFVFKH. The interval 161 to 218 is his-rich loop; it reads HGGHGHSHGSGHGHSHSLFNGALDQTHGHGDHCHSHELKHGAAHSHDHAHGHGHFHSH. The Cytoplasmic segment spans residues 162 to 236; sequence GGHGHSHGSG…TGPSRQILQG (75 aa). A compositionally biased stretch (basic and acidic residues) spans 188–222; it reads GHGDHCHSHELKHGAAHSHDHAHGHGHFHSHDGPS. A disordered region spans residues 188–226; the sequence is GHGDHCHSHELKHGAAHSHDHAHGHGHFHSHDGPSLKET. A helical membrane pass occupies residues 237–257; that stretch reads VFLHILADTLGSIGVIASAIM. Over 258 to 262 the chain is Lumenal; sequence MQNFG. A helical transmembrane segment spans residues 263–283; it reads LMIADPICSILIAMLIVISVI. Residues 284 to 376 lie on the Cytoplasmic side of the membrane; it reads PLLRESVGIL…LYVQIDFAAM (93 aa).

It belongs to the cation diffusion facilitator (CDF) transporter (TC 2.A.4) family. SLC30A subfamily. As to quaternary structure, homooligomer.

The protein resides in the golgi apparatus membrane. Its subcellular location is the cytoplasmic vesicle. It is found in the golgi apparatus. The protein localises to the trans-Golgi network. It localises to the sarcoplasmic reticulum. The protein resides in the mitochondrion. It catalyses the reaction Zn(2+)(in) = Zn(2+)(out). Its function is as follows. Zinc ion transporter mediating zinc entry from the cytosol into the lumen of organelles along the secretory pathway. By contributing to zinc ion homeostasis within the early secretory pathway, regulates the activation and folding of enzymes like alkaline phosphatases. The polypeptide is Zinc transporter 7 (SLC30A7) (Bos taurus (Bovine)).